We begin with the raw amino-acid sequence, 645 residues long: Chaperone protein DnaK (645 aa).

Thr-201 carries the post-translational modification Phosphothreonine; by autocatalysis. Over residues 606–629 the composition is skewed to low complexity; the sequence is NTNNATAGDNNTTDTGSSSNSDGS. Residues 606-645 are disordered; the sequence is NTNNATAGDNNTTDTGSSSNSDGSKVVDSDYQEIDKKDGK. Residues 630–645 show a composition bias toward basic and acidic residues; it reads KVVDSDYQEIDKKDGK.

It belongs to the heat shock protein 70 family.

Acts as a chaperone. The polypeptide is Chaperone protein DnaK (Ehrlichia ruminantium (strain Gardel)).